The chain runs to 237 residues: Large ribosomal subunit protein uL1 (237 aa).

This sequence belongs to the universal ribosomal protein uL1 family. Part of the 50S ribosomal subunit.

Its function is as follows. Binds directly to 23S rRNA. The L1 stalk is quite mobile in the ribosome, and is involved in E site tRNA release. In terms of biological role, protein L1 is also a translational repressor protein, it controls the translation of the L11 operon by binding to its mRNA. This chain is Large ribosomal subunit protein uL1, found in Dehalococcoides mccartyi (strain CBDB1).